The primary structure comprises 332 residues: L-lactate dehydrogenase C chain (332 aa).

NAD(+) contacts are provided by residues 29-57 and R99; that span reads GAVG…AVDK. Residues R106, N138, and R169 each contribute to the substrate site. Residue N138 participates in NAD(+) binding. H193 acts as the Proton acceptor in catalysis. Residue T248 participates in substrate binding. Residue S301 is modified to Phosphoserine.

Belongs to the LDH/MDH superfamily. LDH family. In terms of assembly, homotetramer. Interacts with RABL2/RABL2A; binds preferentially to GTP-bound RABL2.

The protein localises to the cytoplasm. The enzyme catalyses (S)-lactate + NAD(+) = pyruvate + NADH + H(+). It functions in the pathway fermentation; pyruvate fermentation to lactate; (S)-lactate from pyruvate: step 1/1. In terms of biological role, possible role in sperm motility. The sequence is that of L-lactate dehydrogenase C chain (LDHC) from Sus scrofa (Pig).